The chain runs to 433 residues: 3-deoxy-D-manno-octulosonic acid transferase (433 aa).

The helical; Signal-anchor transmembrane segment at 11 to 31 threads the bilayer; that stretch reads TFLYDCFLIFAFMVGLPRILY. Glu70 functions as the Proton acceptor in the catalytic mechanism. CMP contacts are provided by residues 277–278, 317–319, and 344–347; these read PR, IGW, and NLLE.

Belongs to the glycosyltransferase group 1 family. Glycosyltransferase 30 subfamily.

The protein localises to the cell inner membrane. The enzyme catalyses lipid IVA (E. coli) + CMP-3-deoxy-beta-D-manno-octulosonate = alpha-Kdo-(2-&gt;6)-lipid IVA (E. coli) + CMP + H(+). The catalysed reaction is alpha-Kdo-(2-&gt;6)-lipid IVA (E. coli) + CMP-3-deoxy-beta-D-manno-octulosonate = alpha-Kdo-(2-&gt;4)-alpha-Kdo-(2-&gt;6)-lipid IVA (E. coli) + CMP + H(+). It catalyses the reaction alpha-Kdo-(2-&gt;4)-alpha-Kdo-(2-&gt;6)-lipid IVA (E. coli) + CMP-3-deoxy-beta-D-manno-octulosonate = alpha-Kdo-(2-&gt;8)-alpha-Kdo-(2-&gt;4)-alpha-Kdo-(2-&gt;6)-lipid IVA (E. coli) + CMP + H(+). It carries out the reaction alpha-Kdo-(2-&gt;8)-alpha-Kdo-(2-&gt;4)-alpha-Kdo-(2-&gt;6)-lipid IVA (E. coli) + CMP-3-deoxy-beta-D-manno-octulosonate = alpha-Kdo-(2-&gt;8)-[alpha-Kdo-(2-&gt;4)]-alpha-Kdo-(2-&gt;4)-alpha-Kdo-(2-&gt;6)-lipid IVA + CMP + H(+). Its pathway is bacterial outer membrane biogenesis; LPS core biosynthesis. Functionally, involved in lipopolysaccharide (LPS) biosynthesis. Catalyzes the transfer of predominantly four 3-deoxy-D-manno-octulosonate (Kdo) residues from CMP-Kdo to lipid IV(A), the tetraacyldisaccharide-1,4'-bisphosphate precursor of lipid A. Thus generates the genus-specific LPS epitope of Chlamydia, composed of the trisaccharide alpha-Kdo-(2-&gt;8)-alpha-Kdo-(2-&gt;4)-alpha-Kdo. In Chlamydophila psittaci (strain ATCC VR-125 / 6BC) (Chlamydia psittaci), this protein is 3-deoxy-D-manno-octulosonic acid transferase (waaA).